The chain runs to 331 residues: NADH-quinone oxidoreductase subunit H (331 aa).

8 helical membrane passes run 13–33, 80–100, 113–133, 159–179, 183–203, 249–269, 273–293, and 311–331; these read FLIS…VLTL, WVFL…WLVI, IGLV…IMAG, LILS…VDIV, AGGF…AFFV, VMSA…LPFL, VFNW…FQWI, and KILV…MLVI.

Belongs to the complex I subunit 1 family. NDH-1 is composed of 14 different subunits. Subunits NuoA, H, J, K, L, M, N constitute the membrane sector of the complex.

Its subcellular location is the cell membrane. It carries out the reaction a quinone + NADH + 5 H(+)(in) = a quinol + NAD(+) + 4 H(+)(out). Its function is as follows. NDH-1 shuttles electrons from NADH, via FMN and iron-sulfur (Fe-S) centers, to quinones in the respiratory chain. The immediate electron acceptor for the enzyme in this species is believed to be ubiquinone. Couples the redox reaction to proton translocation (for every two electrons transferred, four hydrogen ions are translocated across the cytoplasmic membrane), and thus conserves the redox energy in a proton gradient. This subunit may bind ubiquinone. The chain is NADH-quinone oxidoreductase subunit H from Rubrobacter xylanophilus (strain DSM 9941 / JCM 11954 / NBRC 16129 / PRD-1).